Here is a 911-residue protein sequence, read N- to C-terminus: Protein translocase subunit SecA (911 aa).

ATP is bound by residues Gln-86, 104 to 108 (GEGKT), and Asp-512. Residues Cys-895, Cys-897, Cys-906, and His-907 each contribute to the Zn(2+) site.

The protein belongs to the SecA family. As to quaternary structure, monomer and homodimer. Part of the essential Sec protein translocation apparatus which comprises SecA, SecYEG and auxiliary proteins SecDF-YajC and YidC. Requires Zn(2+) as cofactor.

The protein localises to the cell inner membrane. It is found in the cytoplasm. The enzyme catalyses ATP + H2O + cellular proteinSide 1 = ADP + phosphate + cellular proteinSide 2.. Functionally, part of the Sec protein translocase complex. Interacts with the SecYEG preprotein conducting channel. Has a central role in coupling the hydrolysis of ATP to the transfer of proteins into and across the cell membrane, serving both as a receptor for the preprotein-SecB complex and as an ATP-driven molecular motor driving the stepwise translocation of polypeptide chains across the membrane. The protein is Protein translocase subunit SecA of Bordetella bronchiseptica (strain ATCC BAA-588 / NCTC 13252 / RB50) (Alcaligenes bronchisepticus).